Consider the following 213-residue polypeptide: Pyridoxine/pyridoxamine 5'-phosphate oxidase (213 aa).

FMN contacts are provided by residues R57–R62, F77–T78, R83, K84, and Q106. R62 provides a ligand contact to substrate. Y124, R128, and S132 together coordinate substrate. A disordered region spans residues G135–P163. Residue Q141–S142 coordinates FMN. Residues L145–P163 are compositionally biased toward basic and acidic residues. W186 lines the FMN pocket. R192 to H194 is a substrate binding site. R196 contributes to the FMN binding site.

The protein belongs to the pyridoxamine 5'-phosphate oxidase family. As to quaternary structure, homodimer. The cofactor is FMN.

The enzyme catalyses pyridoxamine 5'-phosphate + O2 + H2O = pyridoxal 5'-phosphate + H2O2 + NH4(+). It catalyses the reaction pyridoxine 5'-phosphate + O2 = pyridoxal 5'-phosphate + H2O2. It functions in the pathway cofactor metabolism; pyridoxal 5'-phosphate salvage; pyridoxal 5'-phosphate from pyridoxamine 5'-phosphate: step 1/1. The protein operates within cofactor metabolism; pyridoxal 5'-phosphate salvage; pyridoxal 5'-phosphate from pyridoxine 5'-phosphate: step 1/1. Catalyzes the oxidation of either pyridoxine 5'-phosphate (PNP) or pyridoxamine 5'-phosphate (PMP) into pyridoxal 5'-phosphate (PLP). This is Pyridoxine/pyridoxamine 5'-phosphate oxidase from Granulibacter bethesdensis (strain ATCC BAA-1260 / CGDNIH1).